We begin with the raw amino-acid sequence, 188 residues long: Elongation factor P (188 aa).

This sequence belongs to the elongation factor P family.

The protein resides in the cytoplasm. It participates in protein biosynthesis; polypeptide chain elongation. Functionally, involved in peptide bond synthesis. Stimulates efficient translation and peptide-bond synthesis on native or reconstituted 70S ribosomes in vitro. Probably functions indirectly by altering the affinity of the ribosome for aminoacyl-tRNA, thus increasing their reactivity as acceptors for peptidyl transferase. This Nitrosospira multiformis (strain ATCC 25196 / NCIMB 11849 / C 71) protein is Elongation factor P.